A 381-amino-acid chain; its full sequence is Alkanesulfonate monooxygenase (381 aa).

This sequence belongs to the SsuD family. In terms of assembly, homotetramer.

It catalyses the reaction an alkanesulfonate + FMNH2 + O2 = an aldehyde + FMN + sulfite + H2O + 2 H(+). In terms of biological role, catalyzes the desulfonation of aliphatic sulfonates. The chain is Alkanesulfonate monooxygenase from Escherichia coli O7:K1 (strain IAI39 / ExPEC).